The sequence spans 609 residues: Mitogen-activated protein kinase kinase kinase 3 (609 aa).

A disordered region spans residues 1–202 (MPTWWGRKSC…SAVHGSRIGG (202 aa)). Residues 11–28 (KNKDDNHRGIISTDRDIK) are compositionally biased toward basic and acidic residues. 2 stretches are compositionally biased toward low complexity: residues 40–64 (PTRG…GFDS) and 90–108 (VSGS…SSGS). The Protein kinase domain occupies 214 to 470 (WKKGKFLGSG…ASQLLEHPFL (257 aa)). ATP is bound by residues 220 to 228 (LGSGTFGQV) and Lys243. The active-site Proton acceptor is Asp339. 2 disordered regions span residues 487-511 (PRSY…SHDN) and 590-609 (MEPS…SRLV). Over residues 594–609 (SFRTQTPNSPLRSRLV) the composition is skewed to polar residues.

The protein belongs to the protein kinase superfamily. STE Ser/Thr protein kinase family. MAP kinase kinase kinase subfamily. In terms of assembly, interacts with PBL27. As to expression, expressed in flower buds, roots, leaves, seedlings, stems and immature siliques. Absent of mature pollen.

It carries out the reaction L-seryl-[protein] + ATP = O-phospho-L-seryl-[protein] + ADP + H(+). The catalysed reaction is L-threonyl-[protein] + ATP = O-phospho-L-threonyl-[protein] + ADP + H(+). This Arabidopsis thaliana (Mouse-ear cress) protein is Mitogen-activated protein kinase kinase kinase 3.